A 121-amino-acid chain; its full sequence is Large ribosomal subunit protein eL18 (121 aa).

This sequence belongs to the eukaryotic ribosomal protein eL18 family.

The sequence is that of Large ribosomal subunit protein eL18 from Methanospirillum hungatei JF-1 (strain ATCC 27890 / DSM 864 / NBRC 100397 / JF-1).